A 321-amino-acid chain; its full sequence is Mas-related G-protein coupled receptor member H (321 aa).

Residues 1-35 (MEPLATTLCPQECTQTTRNETPNETTWSSEHVTKY) lie on the Extracellular side of the membrane. N-linked (GlcNAc...) asparagine glycosylation occurs at Asn23. Residues 36 to 56 (TYISISLVICSLGLVGNGLLI) form a helical membrane-spanning segment. The Cytoplasmic portion of the chain corresponds to 57–71 (WFLIFCIKRKPFTIY). The helical transmembrane segment at 72 to 92 (ILHLAFADFMVLLCSSIIQLV) threads the bilayer. Over 93–102 (NTFHIYDSTL) the chain is Extracellular. A helical transmembrane segment spans residues 103–126 (VSYAVLFMIFGYNTGLHLLTAISV). At 127–147 (ERCLSVLYPIWYHCRRPKHQS) the chain is on the cytoplasmic side. Residues 148-168 (TVACTLLWALSVLVSGLENFF) form a helical membrane-spanning segment. The Extracellular segment spans residues 169 to 188 (CILEVKPQFPECRYVYIFSC). Residues 189-209 (TLTFLVFVPLMVFSNLILFIQ) form a helical membrane-spanning segment. The Cytoplasmic segment spans residues 210 to 225 (VCCNLKPRQPAKLYVI). Residues 226-246 (IMATVILFLVFAMPMKVLLII) traverse the membrane as a helical segment. Residue Gly247 is a topological domain, extracellular. A helical membrane pass occupies residues 248–271 (YYSNSTDASVWKSLPYLNMLSTIN). The Cytoplasmic portion of the chain corresponds to 272 to 320 (CSINPIVYFVVGSLRRKRSRKSLKEALQKVFEEKPVVASRENEVQFSLP).

This sequence belongs to the G-protein coupled receptor 1 family. Mas subfamily.

The protein localises to the cell membrane. Functionally, orphan receptor. May regulate nociceptor function and/or development, including the sensation or modulation of pain. The protein is Mas-related G-protein coupled receptor member H (Mrgprh) of Rattus norvegicus (Rat).